Reading from the N-terminus, the 372-residue chain is Heat-inducible transcription repressor HrcA (372 aa).

A disordered region spans residues 300–334; the sequence is YGRSGAAGEPAGNDPVGEPETESETESQTNDTEPI.

This sequence belongs to the HrcA family.

Its function is as follows. Negative regulator of class I heat shock genes (grpE-dnaK-dnaJ and groELS operons). Prevents heat-shock induction of these operons. This Bifidobacterium longum (strain DJO10A) protein is Heat-inducible transcription repressor HrcA.